The following is a 420-amino-acid chain: MLAEIISIGDELLIGQVVNTNATFISKCLDEIGISTRRILTVSDKPDCIERQLADSLSHADLVLTTGGLGPTHDDITKKIIADFFGLGYEFNEEAFERCKALFARRGREMPASNRSQGEVIEGSVVLQNTRGTAPGMILQNLPNYEGKFVVIMPGVPYEMQEMMRVSVVPFFQPHSKHFIKHTSLMTAGIGESTLAEQIGEVKAFLPDGSTLAFLPHSVGVRLRVSSKGENFQAVQKEHAQVVDALKARIGGYLYATTDMPLEEHIGELLKSRGLSIATAESCTGGLIANRLTNIPGSSAYFYQGFVTYSNEAKIKALGVREETLAAHGAVSEETAQEMAAGCLEKTGSDIAISTTGIAGPGGGTEIKPVGMVCIGVATSAKLGSRSFAKTMIFWADRLLNKERFSEAALNLVRELLNAS.

Belongs to the CinA family.

The sequence is that of CinA-like protein from Chloroherpeton thalassium (strain ATCC 35110 / GB-78).